The following is a 195-amino-acid chain: Probable nicotinate-nucleotide adenylyltransferase (195 aa).

This sequence belongs to the NadD family.

It carries out the reaction nicotinate beta-D-ribonucleotide + ATP + H(+) = deamido-NAD(+) + diphosphate. Its pathway is cofactor biosynthesis; NAD(+) biosynthesis; deamido-NAD(+) from nicotinate D-ribonucleotide: step 1/1. Catalyzes the reversible adenylation of nicotinate mononucleotide (NaMN) to nicotinic acid adenine dinucleotide (NaAD). The chain is Probable nicotinate-nucleotide adenylyltransferase from Salinibacter ruber (strain DSM 13855 / M31).